The primary structure comprises 345 residues: Leucine zipper protein 2 (345 aa).

Residues 1–19 form the signal peptide; it reads MKFNAAHYLLPLLPALVLS. The stretch at 16-211 forms a coiled coil; that stretch reads LVLSTRQDYE…QMKAMKETVQ (196 aa). Residue Asn133 is glycosylated (N-linked (GlcNAc...) asparagine). The leucine-zipper stretch occupies residues 164–192; it reads LRYGKKDLLFKAQQLTELEQKLAVAKNEL. The interval 223–345 is disordered; sequence PPLSLMPSNP…GTPAREEKLL (123 aa). Over residues 261–277 the composition is skewed to basic and acidic residues; it reads GHHDSSQVQATKEESRR. The segment covering 298 to 313 has biased composition (polar residues); the sequence is PQSNSTAESELTTQKL. Asn301 is a glycosylation site (N-linked (GlcNAc...) asparagine).

As to expression, expression found only in the brain and spinal cord.

Its subcellular location is the secreted. This is Leucine zipper protein 2 (Luzp2) from Mus musculus (Mouse).